Here is a 567-residue protein sequence, read N- to C-terminus: Malate synthase, glyoxysomal (567 aa).

Arg-182 acts as the Proton acceptor in catalysis. Asp-468 serves as the catalytic Proton donor. A Microbody targeting signal motif is present at residues 565–567 (SKL).

The protein belongs to the malate synthase family.

The protein localises to the glyoxysome. It carries out the reaction glyoxylate + acetyl-CoA + H2O = (S)-malate + CoA + H(+). It functions in the pathway carbohydrate metabolism; glyoxylate cycle; (S)-malate from isocitrate: step 2/2. The sequence is that of Malate synthase, glyoxysomal from Gossypium hirsutum (Upland cotton).